A 191-amino-acid chain; its full sequence is MLAIGITGSYASGKTFILNYLSAKGYKTFCADRCIKELYKDIVLQTQILKILPELEYFNIRKISNLIYNNDIAREKLQNFIYPLLIDKLILFKKENTNYKLAFSEIPLLYEAKFEQYFDFVVTIYCSEEIRMQRAITRAEFDINIYNKIKEIQLSQESKIAKADFSINSGVDMLDLEKQITKLIKDLECRV.

Residues 3 to 191 (AIGITGSYAS…KLIKDLECRV (189 aa)) form the DPCK domain. Residue 11–16 (ASGKTF) coordinates ATP.

This sequence belongs to the CoaE family.

The protein resides in the cytoplasm. It catalyses the reaction 3'-dephospho-CoA + ATP = ADP + CoA + H(+). Its pathway is cofactor biosynthesis; coenzyme A biosynthesis; CoA from (R)-pantothenate: step 5/5. In terms of biological role, catalyzes the phosphorylation of the 3'-hydroxyl group of dephosphocoenzyme A to form coenzyme A. This chain is Dephospho-CoA kinase, found in Rickettsia prowazekii (strain Madrid E).